The following is a 151-amino-acid chain: Deoxyuridine 5'-triphosphate nucleotidohydrolase (151 aa).

Residues 70–72, N83, 87–89, and M97 contribute to the substrate site; these read RSG and LID.

It belongs to the dUTPase family. Mg(2+) is required as a cofactor.

The enzyme catalyses dUTP + H2O = dUMP + diphosphate + H(+). It participates in pyrimidine metabolism; dUMP biosynthesis; dUMP from dCTP (dUTP route): step 2/2. This enzyme is involved in nucleotide metabolism: it produces dUMP, the immediate precursor of thymidine nucleotides and it decreases the intracellular concentration of dUTP so that uracil cannot be incorporated into DNA. The chain is Deoxyuridine 5'-triphosphate nucleotidohydrolase from Pseudomonas fluorescens (strain ATCC BAA-477 / NRRL B-23932 / Pf-5).